The sequence spans 429 residues: Phosphoribosylamine--glycine ligase (429 aa).

In terms of domain architecture, ATP-grasp spans 108–315 (KDFLARHRIP…LVLLVEAALA (208 aa)). 134–195 (LHEQGAPIVI…EEFLDGEEAS (62 aa)) is a binding site for ATP. Residues E285 and N287 each contribute to the Mg(2+) site.

This sequence belongs to the GARS family. Mg(2+) serves as cofactor. It depends on Mn(2+) as a cofactor.

The enzyme catalyses 5-phospho-beta-D-ribosylamine + glycine + ATP = N(1)-(5-phospho-beta-D-ribosyl)glycinamide + ADP + phosphate + H(+). It participates in purine metabolism; IMP biosynthesis via de novo pathway; N(1)-(5-phospho-D-ribosyl)glycinamide from 5-phospho-alpha-D-ribose 1-diphosphate: step 2/2. This chain is Phosphoribosylamine--glycine ligase, found in Pseudomonas aeruginosa (strain ATCC 15692 / DSM 22644 / CIP 104116 / JCM 14847 / LMG 12228 / 1C / PRS 101 / PAO1).